We begin with the raw amino-acid sequence, 425 residues long: RNA polymerase II-associated factor 1 homolog (425 aa).

Residues 152 to 174 (KKNQQVEDMYRDKQSQIDAINKT) are a coiled coil. A disordered region spans residues 331-425 (SRKSKLTLTY…KEPTVDSDSD (95 aa)). Basic and acidic residues-rich tracts occupy residues 344 to 380 (SELE…KEEG) and 393 to 402 (DKPQKSRSDS).

It belongs to the PAF1 family. As to quaternary structure, component of the PAF1 complex which consists of at least cdc-73, ctr-9, leo-1, pafo-1 and rtfo-1.

It is found in the nucleus. Functionally, component of the PAF1 complex which is a multifunctional complex involved in transcription initiation via genetic interactions with TATA-binding proteins, elongation and transcription-coupled histone modification. In Caenorhabditis elegans, this protein is RNA polymerase II-associated factor 1 homolog.